A 508-amino-acid chain; its full sequence is 25-hydroxyvitamin D-1 alpha hydroxylase, mitochondrial (508 aa).

Position 455 (cysteine 455) interacts with heme.

Belongs to the cytochrome P450 family. Requires heme as cofactor. Kidney.

It is found in the mitochondrion membrane. The enzyme catalyses calcidiol + 2 reduced [adrenodoxin] + O2 + 2 H(+) = calcitriol + 2 oxidized [adrenodoxin] + H2O. The catalysed reaction is secalciferol + 2 reduced [adrenodoxin] + O2 + 2 H(+) = calcitetrol + 2 oxidized [adrenodoxin] + H2O. It carries out the reaction 25-hydroxy-24-oxocalciol + 2 reduced [adrenodoxin] + O2 + 2 H(+) = (1S)-1,25-dihydroxy-24-oxocalciol + 2 oxidized [adrenodoxin] + H2O. It catalyses the reaction 25-hydroxyvitamin D2 + 2 reduced [adrenodoxin] + O2 + 2 H(+) = 1alpha,25-dihydroxyvitamin D2 + 2 oxidized [adrenodoxin] + H2O. It participates in hormone biosynthesis; vitamin D biosynthesis. Its activity is regulated as follows. Activated by cardiolipin and dioleoyl phosphatidylethanolamine (DOPE), phospholipids found in the inner mitochondrial membrane. Inhibited by high substrate concentration. Functionally, a cytochrome P450 monooxygenase involved in vitamin D metabolism and in calcium and phosphorus homeostasis. Catalyzes the rate-limiting step in the activation of vitamin D in the kidney, namely the hydroxylation of 25-hydroxyvitamin D3/calcidiol at the C1alpha-position to form the hormonally active form of vitamin D3, 1alpha,25-dihydroxyvitamin D3/calcitriol that acts via the vitamin D receptor (VDR). Has 1alpha-hydroxylase activity on vitamin D intermediates of the CYP24A1-mediated inactivation pathway. Converts 24R,25-dihydroxyvitamin D3/secalciferol to 1-alpha,24,25-trihydroxyvitamin D3, an active ligand of VDR. Also active on 25-hydroxyvitamin D2. Mechanistically, uses molecular oxygen inserting one oxygen atom into a substrate, and reducing the second into a water molecule, with two electrons provided by NADPH via FDXR/adrenodoxin reductase and FDX1/adrenodoxin. This chain is 25-hydroxyvitamin D-1 alpha hydroxylase, mitochondrial (CYP27B1), found in Homo sapiens (Human).